A 451-amino-acid polypeptide reads, in one-letter code: tRNA-2-methylthio-N(6)-dimethylallyladenosine synthase (451 aa).

In terms of domain architecture, MTTase N-terminal spans 18 to 134 (ARVYLETYGC…LPNLLDLAES (117 aa)). Positions 27, 63, 97, 170, 174, and 177 each coordinate [4Fe-4S] cluster. The Radical SAM core domain maps to 156-386 (RKNGHSAFLA…IALQQKISAE (231 aa)). In terms of domain architecture, TRAM spans 389–451 (RNDIGNTHEV…TSATLIGNAL (63 aa)).

The protein belongs to the methylthiotransferase family. MiaB subfamily. Monomer. [4Fe-4S] cluster serves as cofactor.

The protein localises to the cytoplasm. The catalysed reaction is N(6)-dimethylallyladenosine(37) in tRNA + (sulfur carrier)-SH + AH2 + 2 S-adenosyl-L-methionine = 2-methylsulfanyl-N(6)-dimethylallyladenosine(37) in tRNA + (sulfur carrier)-H + 5'-deoxyadenosine + L-methionine + A + S-adenosyl-L-homocysteine + 2 H(+). Functionally, catalyzes the methylthiolation of N6-(dimethylallyl)adenosine (i(6)A), leading to the formation of 2-methylthio-N6-(dimethylallyl)adenosine (ms(2)i(6)A) at position 37 in tRNAs that read codons beginning with uridine. This chain is tRNA-2-methylthio-N(6)-dimethylallyladenosine synthase, found in Chloroherpeton thalassium (strain ATCC 35110 / GB-78).